Reading from the N-terminus, the 350-residue chain is Protein RecA (350 aa).

67–74 (GPESSGKT) lines the ATP pocket.

It belongs to the RecA family.

The protein resides in the cytoplasm. In terms of biological role, can catalyze the hydrolysis of ATP in the presence of single-stranded DNA, the ATP-dependent uptake of single-stranded DNA by duplex DNA, and the ATP-dependent hybridization of homologous single-stranded DNAs. It interacts with LexA causing its activation and leading to its autocatalytic cleavage. This Mycobacterium avium (strain 104) protein is Protein RecA.